The sequence spans 302 residues: Ribosomal RNA small subunit methyltransferase H (302 aa).

S-adenosyl-L-methionine-binding positions include A34–H36, D53, F80, D101, and Q108. The segment at L283–R302 is disordered. Positions K290 to R302 are enriched in basic residues.

This sequence belongs to the methyltransferase superfamily. RsmH family.

The protein localises to the cytoplasm. The catalysed reaction is cytidine(1402) in 16S rRNA + S-adenosyl-L-methionine = N(4)-methylcytidine(1402) in 16S rRNA + S-adenosyl-L-homocysteine + H(+). Specifically methylates the N4 position of cytidine in position 1402 (C1402) of 16S rRNA. In Mycoplasma mobile (strain ATCC 43663 / 163K / NCTC 11711) (Mesomycoplasma mobile), this protein is Ribosomal RNA small subunit methyltransferase H.